Here is a 188-residue protein sequence, read N- to C-terminus: Apolipoprotein M (188 aa).

The not cleaved signal peptide spans 1–22 (MFHQIWAALLYFYGIILNSIYQ). Cystine bridges form between cysteine 23–cysteine 167, cysteine 95–cysteine 183, and cysteine 128–cysteine 157. An N-linked (GlcNAc...) asparagine glycan is attached at asparagine 135. Positions 136 and 143 each coordinate tetradecanoate.

Belongs to the calycin superfamily. Lipocalin family. Highly divergent. In terms of assembly, interacts with LRP2; LRP2 mediates APOM renal uptake and subsequent lysosomal degradation. Plasma protein. Expressed in liver and kidney.

Its subcellular location is the secreted. Probably involved in lipid transport. Can bind sphingosine-1-phosphate, myristic acid, palmitic acid and stearic acid, retinol, all-trans-retinoic acid and 9-cis-retinoic acid. The protein is Apolipoprotein M (APOM) of Homo sapiens (Human).